The primary structure comprises 804 residues: Phenylalanine--tRNA ligase beta subunit (804 aa).

The 116-residue stretch at glycine 40–leucine 155 folds into the tRNA-binding domain. The B5 domain occupies isoleucine 409 to serine 484. Mg(2+) contacts are provided by aspartate 462, aspartate 468, glutamate 471, and glutamate 472. In terms of domain architecture, FDX-ACB spans proline 710–arginine 803.

This sequence belongs to the phenylalanyl-tRNA synthetase beta subunit family. Type 1 subfamily. As to quaternary structure, tetramer of two alpha and two beta subunits. It depends on Mg(2+) as a cofactor.

It is found in the cytoplasm. It catalyses the reaction tRNA(Phe) + L-phenylalanine + ATP = L-phenylalanyl-tRNA(Phe) + AMP + diphosphate + H(+). The polypeptide is Phenylalanine--tRNA ligase beta subunit (pheT) (Bacillus subtilis (strain 168)).